We begin with the raw amino-acid sequence, 288 residues long: Bifunctional protein FolD (288 aa).

Residues Gly166 to Ser168 and Ile232 each bind NADP(+).

It belongs to the tetrahydrofolate dehydrogenase/cyclohydrolase family. Homodimer.

The enzyme catalyses (6R)-5,10-methylene-5,6,7,8-tetrahydrofolate + NADP(+) = (6R)-5,10-methenyltetrahydrofolate + NADPH. It catalyses the reaction (6R)-5,10-methenyltetrahydrofolate + H2O = (6R)-10-formyltetrahydrofolate + H(+). It participates in one-carbon metabolism; tetrahydrofolate interconversion. Its function is as follows. Catalyzes the oxidation of 5,10-methylenetetrahydrofolate to 5,10-methenyltetrahydrofolate and then the hydrolysis of 5,10-methenyltetrahydrofolate to 10-formyltetrahydrofolate. The sequence is that of Bifunctional protein FolD from Salmonella heidelberg (strain SL476).